The primary structure comprises 466 residues: UDP-N-acetylmuramate--L-alanine ligase (466 aa).

114–120 (GTHGKTT) lines the ATP pocket.

Belongs to the MurCDEF family.

It localises to the cytoplasm. The enzyme catalyses UDP-N-acetyl-alpha-D-muramate + L-alanine + ATP = UDP-N-acetyl-alpha-D-muramoyl-L-alanine + ADP + phosphate + H(+). It functions in the pathway cell wall biogenesis; peptidoglycan biosynthesis. Its function is as follows. Cell wall formation. This chain is UDP-N-acetylmuramate--L-alanine ligase, found in Chlorobium phaeobacteroides (strain DSM 266 / SMG 266 / 2430).